Reading from the N-terminus, the 435-residue chain is NADH-quinone oxidoreductase subunit D 2 (435 aa).

Belongs to the complex I 49 kDa subunit family. In terms of assembly, NDH-1 is composed of 14 different subunits. Subunits NuoB, C, D, E, F, and G constitute the peripheral sector of the complex.

It localises to the cell inner membrane. The catalysed reaction is a quinone + NADH + 5 H(+)(in) = a quinol + NAD(+) + 4 H(+)(out). Its function is as follows. NDH-1 shuttles electrons from NADH, via FMN and iron-sulfur (Fe-S) centers, to quinones in the respiratory chain. The immediate electron acceptor for the enzyme in this species is believed to be ubiquinone. Couples the redox reaction to proton translocation (for every two electrons transferred, four hydrogen ions are translocated across the cytoplasmic membrane), and thus conserves the redox energy in a proton gradient. The chain is NADH-quinone oxidoreductase subunit D 2 from Stenotrophomonas maltophilia (strain R551-3).